A 440-amino-acid polypeptide reads, in one-letter code: Light-independent protochlorophyllide reductase subunit B (440 aa).

A [4Fe-4S] cluster-binding site is contributed by aspartate 36. A substrate-binding site is contributed by 427 to 428 (KD).

This sequence belongs to the ChlB/BchB/BchZ family. In terms of assembly, protochlorophyllide reductase is composed of three subunits; ChlL, ChlN and ChlB. Forms a heterotetramer of two ChlB and two ChlN subunits. Requires [4Fe-4S] cluster as cofactor.

The protein resides in the plastid. It localises to the cyanelle. The enzyme catalyses chlorophyllide a + oxidized 2[4Fe-4S]-[ferredoxin] + 2 ADP + 2 phosphate = protochlorophyllide a + reduced 2[4Fe-4S]-[ferredoxin] + 2 ATP + 2 H2O. The protein operates within porphyrin-containing compound metabolism; chlorophyll biosynthesis (light-independent). Component of the dark-operative protochlorophyllide reductase (DPOR) that uses Mg-ATP and reduced ferredoxin to reduce ring D of protochlorophyllide (Pchlide) to form chlorophyllide a (Chlide). This reaction is light-independent. The NB-protein (ChlN-ChlB) is the catalytic component of the complex. The protein is Light-independent protochlorophyllide reductase subunit B of Cyanophora paradoxa.